A 262-amino-acid polypeptide reads, in one-letter code: Histone chaperone cia1 (262 aa).

A disordered region spans residues 157–262 (IQWDNPDFDD…KPEEKPETSQ (106 aa)). Coiled-coil stretches lie at residues 173-196 (DADEEEEEEEADEMEEEFDEEGEG) and 223-253 (KGSEEEEEEEIDIEEEEEESALANASAAEEK). 2 stretches are compositionally biased toward acidic residues: residues 173 to 219 (DADE…GEGE) and 226 to 242 (EEEEEEEIDIEEEEEES). Residues 250–262 (AEEKPEEKPETSQ) are compositionally biased toward basic and acidic residues.

This sequence belongs to the ASF1 family. In terms of assembly, interacts with histone H3 and histone H4.

Its subcellular location is the nucleus. Histone chaperone that facilitates histone deposition and histone exchange and removal during nucleosome assembly and disassembly. This Schizosaccharomyces pombe (strain 972 / ATCC 24843) (Fission yeast) protein is Histone chaperone cia1 (cia1).